A 112-amino-acid chain; its full sequence is Nitrogen regulatory protein P-II (112 aa).

Tyr51 is subject to O-UMP-tyrosine.

Belongs to the P(II) protein family. Homotrimer.

P-II indirectly controls the transcription of the glutamine synthetase gene (glnA). P-II prevents NR-II-catalyzed conversion of NR-I to NR-I-phosphate, the transcriptional activator of glnA. When P-II is uridylylated to P-II-UMP, these events are reversed. When the ratio of Gln to 2-ketoglutarate decreases, P-II is uridylylated to P-II-UMP, which causes the deadenylation of glutamine synthetase, so activating the enzyme. This is Nitrogen regulatory protein P-II (glnB) from Rhodospirillum rubrum (strain ATCC 11170 / ATH 1.1.1 / DSM 467 / LMG 4362 / NCIMB 8255 / S1).